The primary structure comprises 130 residues: Small ribosomal subunit protein uS9 (130 aa).

This sequence belongs to the universal ribosomal protein uS9 family.

The sequence is that of Small ribosomal subunit protein uS9 from Pseudomonas aeruginosa (strain LESB58).